Consider the following 361-residue polypeptide: Single-stranded DNA-binding protein 3 (361 aa).

Met1 carries the N-acetylmethionine modification. Residues 16–48 (AREKLALYVYEYLLHVGAQKSAQTFLSEIRWEK) form the LisH domain. 3 positions are modified to asymmetric dimethylarginine: Arg128, Arg134, and Arg138. Disordered regions lie at residues 140-166 (GNQP…QQGH) and 184-361 (PMGP…TMSV). Positions 223 to 241 (PNSANSIPYSSSSPGTYVG) are enriched in low complexity. Residues 245-255 (GGGPPGTPIMP) show a composition bias toward pro residues. Polar residues predominate over residues 258–269 (ADSTNSSDNIYT). Residues 288-298 (GSDGPMGGMGG) show a composition bias toward gly residues. Residues 319–330 (NSPNNISGISNP) are compositionally biased toward low complexity. A phosphoserine mark is found at Ser320, Ser325, and Ser328. Thr333 is modified (phosphothreonine). A compositionally biased stretch (polar residues) spans 346–361 (HSFQNDNYSPSMTMSV). A phosphoserine mark is found at Ser354 and Ser360.

It is found in the nucleus. Functionally, may be involved in transcription regulation of the alpha 2(I) collagen gene where it binds to the single-stranded polypyrimidine sequences in the promoter region. The sequence is that of Single-stranded DNA-binding protein 3 (Ssbp3) from Rattus norvegicus (Rat).